We begin with the raw amino-acid sequence, 194 residues long: Ion-translocating oxidoreductase complex subunit B (194 aa).

Positions methionine 1 to serine 26 are hydrophobic. One can recognise a 4Fe-4S domain in the interval glutamate 32–valine 90. [4Fe-4S] cluster-binding residues include cysteine 49, cysteine 52, cysteine 57, cysteine 73, cysteine 114, cysteine 117, cysteine 120, cysteine 124, cysteine 144, cysteine 147, cysteine 150, and cysteine 154. 4Fe-4S ferredoxin-type domains are found at residues lysine 105 to lysine 134 and alanine 135 to valine 164.

It belongs to the 4Fe4S bacterial-type ferredoxin family. RnfB subfamily. In terms of assembly, the complex is composed of six subunits: RnfA, RnfB, RnfC, RnfD, RnfE and RnfG. The cofactor is [4Fe-4S] cluster.

The protein resides in the cell inner membrane. In terms of biological role, part of a membrane-bound complex that couples electron transfer with translocation of ions across the membrane. This chain is Ion-translocating oxidoreductase complex subunit B, found in Aliivibrio fischeri (strain ATCC 700601 / ES114) (Vibrio fischeri).